We begin with the raw amino-acid sequence, 91 residues long: CRISPR-associated endoribonuclease Cas2 (91 aa).

Aspartate 14 lines the Mg(2+) pocket.

Belongs to the CRISPR-associated endoribonuclease Cas2 protein family. In terms of assembly, homodimer, forms a heterotetramer with a Cas1 homodimer. The cofactor is Mg(2+).

CRISPR (clustered regularly interspaced short palindromic repeat), is an adaptive immune system that provides protection against mobile genetic elements (viruses, transposable elements and conjugative plasmids). CRISPR clusters contain sequences complementary to antecedent mobile elements and target invading nucleic acids. CRISPR clusters are transcribed and processed into CRISPR RNA (crRNA). Functions as a ssRNA-specific endoribonuclease. Involved in the integration of spacer DNA into the CRISPR cassette. This chain is CRISPR-associated endoribonuclease Cas2, found in Nanoarchaeum equitans (strain Kin4-M).